Consider the following 211-residue polypeptide: MLSYYFQGLVLGAAMILPLGPQNAFVMNQGIRRQYHLMIAMLCAVSDLLLICAGIFGGSALLMQSPWLLALVTWGGVAFLLWYGFGALKTAMGSNLELATAEVMKQGRWKIIATMLAVTWLNPHVYLDTFVVLGSLGGQLDVEPRRWFALGTVSASFLWFFGLALLAAWLAPRLRTAKAQRVINTLVGLVMWFIAFQLAKEGIHHIQGLLN.

Helical transmembrane passes span 1–21 (MLSYYFQGLVLGAAMILPLGP), 37–57 (LMIAMLCAVSDLLLICAGIFG), 68–88 (LLALVTWGGVAFLLWYGFGAL), 111–131 (IIATMLAVTWLNPHVYLDTFV), 147–167 (WFALGTVSASFLWFFGLALLA), and 186–206 (LVGLVMWFIAFQLAKEGIHHI).

Belongs to the LysE/ArgO transporter (TC 2.A.75) family.

Its subcellular location is the cell inner membrane. It carries out the reaction L-arginine(in) = L-arginine(out). In terms of biological role, involved in the export of arginine. Important to control the intracellular level of arginine and the correct balance between arginine and lysine. The sequence is that of Arginine exporter protein ArgO from Enterobacter sp. (strain 638).